Reading from the N-terminus, the 272-residue chain is MFDLTGKHVCYVADCGGIALETSKVLMTKNIAKLAILQSTENPQAIAQLQSIKPSTQIFFWTYDVTMAREEMKKYFDEVMVQMDYIDVLINGATLCDENNIDATINTNLTGMMNTVATVLPYMDRKMGGSGGLIVNVTSVIGLDPSPVFCAYSASKFGVIGFTRSLADPLYYSQNGVAVMAVCCGPTRVFVDRELKAFLEYGQSFADRLRRAPCQSTSVCGQNIVNAIERSENGQIWIADKGGLELVKLHWYWHMADQFVHYMQSNDEEDQD.

11–34 is an NAD(+) binding site; sequence YVADCGGIALETSKVLMTKNIAKL. S139 contacts substrate. Y152 serves as the catalytic Proton acceptor.

The protein belongs to the short-chain dehydrogenases/reductases (SDR) family.

In Drosophila mauritiana (Fruit fly), this protein is Alcohol dehydrogenase-related 31 kDa protein (Adhr).